The sequence spans 163 residues: Nucleotide-binding protein Mflv_5248 (163 aa).

Belongs to the YajQ family.

Nucleotide-binding protein. The sequence is that of Nucleotide-binding protein Mflv_5248 from Mycolicibacterium gilvum (strain PYR-GCK) (Mycobacterium gilvum (strain PYR-GCK)).